We begin with the raw amino-acid sequence, 90 residues long: UPF0298 protein YlbG (90 aa).

It belongs to the UPF0298 family.

The protein localises to the cytoplasm. The sequence is that of UPF0298 protein YlbG (ylbG) from Bacillus subtilis (strain 168).